Reading from the N-terminus, the 290-residue chain is Carbonic anhydrase-related protein (290 aa).

At S5 the chain carries Phosphoserine. An Alpha-carbonic anhydrase domain is found at 27-289 (VEWGYEEGVE…LSDRVIRAAF (263 aa)). H87 acts as the Proton donor/acceptor in catalysis. Zn(2+) contacts are provided by H118 and H141.

The protein belongs to the alpha-carbonic anhydrase family.

In terms of biological role, does not have a carbonic anhydrase catalytic activity. The sequence is that of Carbonic anhydrase-related protein (Ca8) from Rattus norvegicus (Rat).